We begin with the raw amino-acid sequence, 338 residues long: Probable tRNA pseudouridine synthase B (338 aa).

The active-site Nucleophile is the Asp-82. Positions 250 to 325 (LPKVWIRDSA…IAVDVDKVFM (76 aa)) constitute a PUA domain.

Belongs to the pseudouridine synthase TruB family. Type 2 subfamily.

It carries out the reaction uridine(55) in tRNA = pseudouridine(55) in tRNA. Its function is as follows. Could be responsible for synthesis of pseudouridine from uracil-55 in the psi GC loop of transfer RNAs. The sequence is that of Probable tRNA pseudouridine synthase B from Thermococcus kodakarensis (strain ATCC BAA-918 / JCM 12380 / KOD1) (Pyrococcus kodakaraensis (strain KOD1)).